Consider the following 203-residue polypeptide: Urease accessory protein UreG (203 aa).

Residue glycine 10 to threonine 17 coordinates GTP.

The protein belongs to the SIMIBI class G3E GTPase family. UreG subfamily. In terms of assembly, homodimer. UreD, UreF and UreG form a complex that acts as a GTP-hydrolysis-dependent molecular chaperone, activating the urease apoprotein by helping to assemble the nickel containing metallocenter of UreC. The UreE protein probably delivers the nickel.

It is found in the cytoplasm. Functionally, facilitates the functional incorporation of the urease nickel metallocenter. This process requires GTP hydrolysis, probably effectuated by UreG. The sequence is that of Urease accessory protein UreG from Micrococcus luteus (strain ATCC 4698 / DSM 20030 / JCM 1464 / CCM 169 / CCUG 5858 / IAM 1056 / NBRC 3333 / NCIMB 9278 / NCTC 2665 / VKM Ac-2230) (Micrococcus lysodeikticus).